Consider the following 147-residue polypeptide: Large ribosomal subunit protein uL15 (147 aa).

The interval 1–57 is disordered; that stretch reads MRLHDVKPQKGSKKRKKRVARGISAGQGASAGLGMRGQKSRSGSGTRPGFEGGQQPL. Over residues 10–20 the composition is skewed to basic residues; it reads KGSKKRKKRVA.

Belongs to the universal ribosomal protein uL15 family. Part of the 50S ribosomal subunit.

Functionally, binds to the 23S rRNA. The chain is Large ribosomal subunit protein uL15 from Nostoc punctiforme (strain ATCC 29133 / PCC 73102).